The primary structure comprises 145 residues: Copper transporter 6 (145 aa).

Helical transmembrane passes span 47 to 67 (LGMY…VEWL) and 99 to 119 (YLVM…AIAG).

The protein belongs to the copper transporter (Ctr) (TC 1.A.56) family. SLC31A subfamily.

The protein localises to the membrane. In terms of biological role, involved in the transport of copper. This Arabidopsis thaliana (Mouse-ear cress) protein is Copper transporter 6 (COPT6).